Reading from the N-terminus, the 95-residue chain is Large ribosomal subunit protein bL25 (95 aa).

The protein belongs to the bacterial ribosomal protein bL25 family. As to quaternary structure, part of the 50S ribosomal subunit; part of the 5S rRNA/L5/L18/L25 subcomplex. Contacts the 5S rRNA. Binds to the 5S rRNA independently of L5 and L18.

In terms of biological role, this is one of the proteins that binds to the 5S RNA in the ribosome where it forms part of the central protuberance. The polypeptide is Large ribosomal subunit protein bL25 (Haemophilus influenzae (strain ATCC 51907 / DSM 11121 / KW20 / Rd)).